The primary structure comprises 334 residues: Tryptophan--tRNA ligase (334 aa).

Residues 11-13 (QPT) and 19-20 (GN) each bind ATP. A 'HIGH' region motif is present at residues 12 to 20 (PTGKLTIGN). Residue Asp-135 participates in L-tryptophan binding. Residues 147-149 (GED), Ile-186, and 195-199 (KMSKS) contribute to the ATP site. The 'KMSKS' region signature appears at 195-199 (KMSKS).

It belongs to the class-I aminoacyl-tRNA synthetase family. Homodimer.

The protein resides in the cytoplasm. The catalysed reaction is tRNA(Trp) + L-tryptophan + ATP = L-tryptophyl-tRNA(Trp) + AMP + diphosphate + H(+). In terms of biological role, catalyzes the attachment of tryptophan to tRNA(Trp). In Blochmanniella floridana, this protein is Tryptophan--tRNA ligase.